Reading from the N-terminus, the 228-residue chain is Expansin-B13 (228 aa).

An N-terminal signal peptide occupies residues 1 to 22 (MASSSLLLASVVVAAMVSAVSC). Residue N32 is glycosylated (N-linked (GlcNAc...) asparagine). In terms of domain architecture, Expansin-like EG45 spans 61 to 172 (SGACGYKDVD…KEKGSEEWKA (112 aa)). Disulfide bonds link C64/C92 and C100/C106. Residues 142-223 (GKDEELLKYV…GWKADSVYKS (82 aa)) enclose the Expansin-like CBD domain.

It belongs to the expansin family. Expansin B subfamily.

The protein localises to the secreted. It is found in the cell wall. The protein resides in the membrane. Functionally, may cause loosening and extension of plant cell walls by disrupting non-covalent bonding between cellulose microfibrils and matrix glucans. No enzymatic activity has been found. May be required for rapid internodal elongation in deepwater rice during submergence. In Oryza sativa subsp. japonica (Rice), this protein is Expansin-B13 (EXPB13).